A 497-amino-acid chain; its full sequence is L-arabinose isomerase (497 aa).

Mn(2+) is bound by residues Glu-306, Glu-331, His-348, and His-447.

This sequence belongs to the arabinose isomerase family. Mn(2+) is required as a cofactor.

It catalyses the reaction beta-L-arabinopyranose = L-ribulose. The protein operates within carbohydrate degradation; L-arabinose degradation via L-ribulose; D-xylulose 5-phosphate from L-arabinose (bacterial route): step 1/3. In terms of biological role, catalyzes the conversion of L-arabinose to L-ribulose. The protein is L-arabinose isomerase of Halalkalibacterium halodurans (strain ATCC BAA-125 / DSM 18197 / FERM 7344 / JCM 9153 / C-125) (Bacillus halodurans).